Reading from the N-terminus, the 699-residue chain is SPS-sensor serine protease component SSY5 (699 aa).

Disordered stretches follow at residues 1–113 (MVRF…LQGF) and 129–158 (VKEE…GNAR). A propeptide spanning residues 1 to 381 (MVRFFGLNKK…YCVKDYIKKA (381 aa)) is cleaved from the precursor. The segment covering 24–38 (NEQNAAETSSSNVSG) has biased composition (polar residues). Positions 39 to 51 (NEERIDPNSHDAN) are enriched in basic and acidic residues. The segment covering 52–78 (PENANNDDASTTFGSSIQSSSIFSRGR) has biased composition (low complexity). Over residues 83–93 (TGASSSMATSE) the composition is skewed to polar residues. Low complexity-rich tracts occupy residues 97-109 (HSSG…NSKN) and 144-154 (SSSTSSTLATS). The tract at residues 459–699 (FAITCAHVVL…QWDIDPQLDG (241 aa)) is serine protease. Active-site charge relay system residues include histidine 465, aspartate 545, and serine 640.

This sequence belongs to the peptidase S64 family. As to quaternary structure, component of the plasma membrane SPS (SSY1-PTR3-SSY5) amino acid sensor complex. Post-translationally, the propeptide is autoproteolytically cleaved from the catalytic domain but remains associated, forming an inactive protease complex. This processing occurs even in the absence of signaling.

It localises to the cell membrane. Protease component of the SPS-sensor system, which regulates the expression of several amino acid-metabolizing enzymes and amino acid- and peptide-permeases in response to extracellular amino acid levels by controlling the activity of two transcription factors, STP1 and STP2. Catalyzes the activation of these transcription factors, which are synthesized as latent cytoplasmic precursors, by proteolytic removal of an N-terminal inhibitory domain containing cytoplasmic retention motifs. SSY5 binds as an inactive protease complex to STP1. In response to extracellular amino acids and dependent on the other SPS-sensor components, the inhibitory propeptide is induced to dissociate, and thereby enables the catalytic domain to process STP1. The protein is SPS-sensor serine protease component SSY5 (SSY5) of Saccharomyces cerevisiae (strain YJM789) (Baker's yeast).